Consider the following 353-residue polypeptide: Heterogeneous nuclear ribonucleoproteins A2/B1 (353 aa).

Position 1 is an N-acetylmethionine (methionine 1). At threonine 4 the chain carries Phosphothreonine. A Nuclear localization signal motif is present at residues 9–15; sequence PLERKKR. 2 RRM domains span residues 21-104 and 112-191; these read RKLF…ESGK and KKLF…LSRQ. A Glycyl lysine isopeptide (Lys-Gly) (interchain with G-Cter in SUMO2) cross-link involves residue lysine 22. Serine 29 carries the post-translational modification Phosphoserine. Omega-N-methylarginine is present on arginine 38. At serine 85 the chain carries Phosphoserine. Lysine 104 bears the N6,N6-dimethyllysine; alternate mark. Lysine 104 participates in a covalent cross-link: Glycyl lysine isopeptide (Lys-Gly) (interchain with G-Cter in SUMO2); alternate. Residues lysine 112, lysine 120, and lysine 137 each participate in a glycyl lysine isopeptide (Lys-Gly) (interchain with G-Cter in SUMO2) cross-link. Residue threonine 140 is modified to Phosphothreonine. Position 149 is a phosphoserine (serine 149). A Glycyl lysine isopeptide (Lys-Gly) (interchain with G-Cter in SUMO2) cross-link involves residue lysine 152. Threonine 159 carries the post-translational modification Phosphothreonine. Glycyl lysine isopeptide (Lys-Gly) (interchain with G-Cter in SUMO2); alternate cross-links involve residues lysine 168 and lysine 173. N6-acetyllysine; alternate is present on residues lysine 168 and lysine 173. Position 176 is a phosphothreonine (threonine 176). Lysine 186 participates in a covalent cross-link: Glycyl lysine isopeptide (Lys-Gly) (interchain with G-Cter in SUMO2). Serine 189 and serine 201 each carry phosphoserine. The interval 193–353 is disordered; sequence MQEVQSSRSG…SGGYGGRSRY (161 aa). The span at 202-223 shows a compositional bias: gly residues; it reads GRGGNFGFGDSRGGGGNFGPGP. Position 203 is an asymmetric dimethylarginine; alternate (arginine 203). Dimethylated arginine; alternate is present on arginine 203. Residue arginine 203 is modified to Omega-N-methylarginine; alternate. Serine 212 is subject to Phosphoserine. At arginine 213 the chain carries Asymmetric dimethylarginine; alternate. The residue at position 213 (arginine 213) is a Dimethylated arginine; alternate. At arginine 213 the chain carries Omega-N-methylarginine; alternate. Residue serine 225 is modified to Phosphoserine. An Omega-N-methylarginine modification is found at arginine 228. Serine 231 and serine 236 each carry phosphoserine. Position 238 is an omega-N-methylarginine (arginine 238). Serine 259 carries the phosphoserine modification. Arginine 266 bears the Asymmetric dimethylarginine; alternate mark. The residue at position 266 (arginine 266) is an Omega-N-methylarginine; alternate. The tract at residues 308 to 347 is nuclear targeting sequence; the sequence is QQPSNYGPMKSGNFGGSRNMGGPYGGGNYGPGGSGGSGGY. A compositionally biased stretch (gly residues) spans 320–353; that stretch reads NFGGSRNMGGPYGGGNYGPGGSGGSGGYGGRSRY. A Phosphoserine modification is found at serine 324. Position 325 is an omega-N-methylarginine (arginine 325). Tyrosine 331 carries the post-translational modification Phosphotyrosine. A phosphoserine mark is found at serine 341 and serine 344. Tyrosine 347 carries the post-translational modification Phosphotyrosine. Omega-N-methylarginine is present on arginine 350.

In terms of assembly, homodimer; dimerization is required for nucleocytoplasmic translocation. Identified in the spliceosome C complex. Identified in a IGF2BP1-dependent mRNP granule complex containing untranslated mRNAs. Interacts with IGF2BP1. Interacts with C9orf72. Interacts with DGCR8. Interacts with TARDBP. Interacts with CKAP5. Interacts with TBK1. Interacts with STING1. Interacts with SRC. Interacts with PPIA/CYPA. Interacts (via C-terminus) with FAM76B; the interaction results in retention of HNRNPA2B1 in the nucleus and inhibition of the NF-kappa-B-mediated inflammatory pathway. Interacts with NF-kappa-B inhibitors NFKBIA and NFKBIE; the interaction may be mediated by the RRM2 domain of HNRNPA2B1, and HNRNPA2B1 may interact simultaneously with FAM76B and either NFKBIA or NFKBIE to form a complex. In terms of processing, asymmetric dimethylation at Arg-266 constitutes the major methylation site. According to a report, methylation affects subcellular location and promotes nuclear localization. According to another report, methylation at Arg-266 does not influence nucleocytoplasmic shuttling. Post-translationally, sumoylated in exosomes, promoting miRNAs-binding. In the brain, isoform A2 and isoform B1 are abundant in large ganglion-type neurons, such as Purkinje cells, and are less abundant in neighboring glia cells. Isoform A2 is more abundant than isoform B1 in brain. In testis, isoform A2 and isoform B1 are present in spermatogonia and spermatocytes, but not in spermatids or sperm. Isoform A2 is more abundant in the adrenal medulla than in the cortical cells. Isoform B1 is found in both adrenal medulla and cortical cells. Isoform A2 is more abundant than isoform B1 in the adrenal gland. Isoform A2 and isoform B1 are both detected in pancreas and kidney, and at lower levels in heart and lung. Isoform B1 is more abundant than isoform A2 in heart, lung and intestine (at protein level). Isoform A2b and isoform B1b are testis-specific.

Its subcellular location is the nucleus. The protein resides in the cytoplasm. It localises to the nucleoplasm. The protein localises to the cytoplasmic granule. It is found in the secreted. Its subcellular location is the extracellular exosome. Its function is as follows. Heterogeneous nuclear ribonucleoprotein (hnRNP) that associates with nascent pre-mRNAs, packaging them into hnRNP particles. The hnRNP particle arrangement on nascent hnRNA is non-random and sequence-dependent and serves to condense and stabilize the transcripts and minimize tangling and knotting. Packaging plays a role in various processes such as transcription, pre-mRNA processing, RNA nuclear export, subcellular location, mRNA translation and stability of mature mRNAs. Forms hnRNP particles with at least 20 other different hnRNP and heterogeneous nuclear RNA in the nucleus. Involved in transport of specific mRNAs to the cytoplasm in oligodendrocytes and neurons: acts by specifically recognizing and binding the A2RE (21 nucleotide hnRNP A2 response element) or the A2RE11 (derivative 11 nucleotide oligonucleotide) sequence motifs present on some mRNAs, and promotes their transport to the cytoplasm. Specifically binds single-stranded telomeric DNA sequences, protecting telomeric DNA repeat against endonuclease digestion. Also binds other RNA molecules, such as primary miRNA (pri-miRNAs): acts as a nuclear 'reader' of the N6-methyladenosine (m6A) mark by specifically recognizing and binding a subset of nuclear m6A-containing pri-miRNAs. Binding to m6A-containing pri-miRNAs promotes pri-miRNA processing by enhancing binding of DGCR8 to pri-miRNA transcripts. Involved in miRNA sorting into exosomes following sumoylation, possibly by binding (m6A)-containing pre-miRNAs. Acts as a regulator of efficiency of mRNA splicing, possibly by binding to m6A-containing pre-mRNAs. Plays a role in the splicing of pyruvate kinase PKM by binding repressively to sequences flanking PKM exon 9, inhibiting exon 9 inclusion and resulting in exon 10 inclusion and production of the PKM M2 isoform. Also plays a role in the activation of the innate immune response. Mechanistically, senses the presence of viral DNA in the nucleus, homodimerizes and is demethylated by JMJD6. In turn, translocates to the cytoplasm where it activates the TBK1-IRF3 pathway, leading to interferon alpha/beta production. The chain is Heterogeneous nuclear ribonucleoproteins A2/B1 from Rattus norvegicus (Rat).